The chain runs to 565 residues: Proline--tRNA ligase (565 aa).

This sequence belongs to the class-II aminoacyl-tRNA synthetase family. ProS type 1 subfamily. As to quaternary structure, homodimer.

It localises to the cytoplasm. The enzyme catalyses tRNA(Pro) + L-proline + ATP = L-prolyl-tRNA(Pro) + AMP + diphosphate. Its function is as follows. Catalyzes the attachment of proline to tRNA(Pro) in a two-step reaction: proline is first activated by ATP to form Pro-AMP and then transferred to the acceptor end of tRNA(Pro). As ProRS can inadvertently accommodate and process non-cognate amino acids such as alanine and cysteine, to avoid such errors it has two additional distinct editing activities against alanine. One activity is designated as 'pretransfer' editing and involves the tRNA(Pro)-independent hydrolysis of activated Ala-AMP. The other activity is designated 'posttransfer' editing and involves deacylation of mischarged Ala-tRNA(Pro). The misacylated Cys-tRNA(Pro) is not edited by ProRS. The polypeptide is Proline--tRNA ligase (Francisella tularensis subsp. holarctica (strain FTNF002-00 / FTA)).